Reading from the N-terminus, the 545-residue chain is Probable protein kinase UbiB (545 aa).

The Protein kinase domain maps to 123–501 (DFEPIALASA…QIKQRQSQYL (379 aa)). ATP is bound by residues 129-137 (LASASIAQV) and lysine 152. Residue aspartate 287 is the Proton acceptor of the active site. The chain crosses the membrane as a helical span at residues 508–528 (LFLCGSLFLLSGLANIPWLFI).

The protein belongs to the ABC1 family. UbiB subfamily.

Its subcellular location is the cell inner membrane. The protein operates within cofactor biosynthesis; ubiquinone biosynthesis [regulation]. Functionally, is probably a protein kinase regulator of UbiI activity which is involved in aerobic coenzyme Q (ubiquinone) biosynthesis. The protein is Probable protein kinase UbiB of Photorhabdus laumondii subsp. laumondii (strain DSM 15139 / CIP 105565 / TT01) (Photorhabdus luminescens subsp. laumondii).